A 585-amino-acid polypeptide reads, in one-letter code: Arginine--tRNA ligase (585 aa).

The 'HIGH' region signature appears at P126 to H136.

This sequence belongs to the class-I aminoacyl-tRNA synthetase family. As to quaternary structure, monomer.

Its subcellular location is the cytoplasm. The catalysed reaction is tRNA(Arg) + L-arginine + ATP = L-arginyl-tRNA(Arg) + AMP + diphosphate. This Trichodesmium erythraeum (strain IMS101) protein is Arginine--tRNA ligase.